Consider the following 688-residue polypeptide: MKTRQNKYSIRKFSVGASSILIAALLFMGGGSAQAAEQQQDKGTVENSTTQSIGDENEKLSEQQSTQNKNVNEKSNVDSITENESLHNETPKNEDLIQQQKDSQNDNKSESVVEQNKENEAFVKKHSEEKPQQEQVELEKHASENNQTLHSKAAQSNEDVKTKPSQLDNTTAQQEDSQKENLSKQDTQSSKTTDLLRATGQNQSKDSQSTEEVNKEVKNDTQQVTAKNDDDKVETFNLNSKEEPLKVDKQANPTTDKDKSSKNDKGSHDGLANLESNAVATTNKQSKQQVSEKNEDQTNKSAKQKQYKNNDPIILVHGFNGFTDDINPSVLTHYWGGDKMNIRQDLEENGYEAYEASISAFGSNYDRAVELYYYIKGGRVDYGAAHAAKYGHERYGKTYEGVYKDWKPGQKIHLVGHSMGGQTIRQLEELLRHGNPEEVEYQKQHGGEISPLFQGGHDNMVSSITTLGTPHNGTHASDLLGNEAIVRQLAYDVGKMYGNKDSRVDFGLEHWGLKQKPNESYIQYVKRVQNSKLWKSKDSGLHDLTRDGATDLNRKTSLNPNIVYKTYTGESTHKTLAGKQKADLNMFLPFTITGNLIGKAKEKEWRENDGLVSVISSQHPFNQKYVEATDKNQKGVWQVTPTKHDWDHVDFVGQDSTDTKRTRDELQQFWHGLADDLVQSEQLTSTNK.

An N-terminal signal peptide occupies residues 1–35; sequence MKTRQNKYSIRKFSVGASSILIAALLFMGGGSAQA. The segment at 31–309 is disordered; the sequence is GSAQAAEQQQ…KSAKQKQYKN (279 aa). The propeptide at 36 to 302 is removed in mature form; the sequence is AEQQQDKGTV…KNEDQTNKSA (267 aa). A compositionally biased stretch (polar residues) spans 45 to 54; the sequence is VENSTTQSIG. Composition is skewed to basic and acidic residues over residues 84–95 and 103–143; these read ESLHNETPKNED and SQND…KHAS. Polar residues-rich tracts occupy residues 144–175 and 184–211; these read ENNQ…AQQE and KQDT…QSTE. A compositionally biased stretch (basic and acidic residues) spans 227–268; that stretch reads KNDDDKVETFNLNSKEEPLKVDKQANPTTDKDKSSKNDKGSH. Residues 274–289 show a composition bias toward polar residues; the sequence is LESNAVATTNKQSKQQ. Ser418 acts as the Nucleophile in catalysis. Residue Asp609 is the Charge relay system of the active site. Asp647 serves as a coordination point for Ca(2+). The active-site Charge relay system is His648. Positions 650, 655, and 658 each coordinate Ca(2+).

It belongs to the AB hydrolase superfamily. Lipase family.

Its subcellular location is the secreted. The enzyme catalyses a triacylglycerol + H2O = a diacylglycerol + a fatty acid + H(+). This Staphylococcus epidermidis (strain ATCC 35984 / DSM 28319 / BCRC 17069 / CCUG 31568 / BM 3577 / RP62A) protein is Lipase (lip).